The following is an 87-amino-acid chain: Small ribosomal subunit protein bS20 (87 aa).

The disordered stretch occupies residues 1 to 24; the sequence is MANTAQARKRARQSVERNKHNSSL.

The protein belongs to the bacterial ribosomal protein bS20 family.

Functionally, binds directly to 16S ribosomal RNA. The chain is Small ribosomal subunit protein bS20 from Bordetella avium (strain 197N).